The following is a 276-amino-acid chain: Diaminopimelate epimerase (276 aa).

Substrate is bound by residues asparagine 13, glutamine 46, and asparagine 66. Cysteine 75 (proton donor) is an active-site residue. Residues 76-77 (GN), asparagine 159, asparagine 192, and 210-211 (ER) contribute to the substrate site. Cysteine 219 (proton acceptor) is an active-site residue. 220–221 (GT) is a substrate binding site.

Belongs to the diaminopimelate epimerase family. As to quaternary structure, homodimer.

It is found in the cytoplasm. The catalysed reaction is (2S,6S)-2,6-diaminopimelate = meso-2,6-diaminopimelate. It participates in amino-acid biosynthesis; L-lysine biosynthesis via DAP pathway; DL-2,6-diaminopimelate from LL-2,6-diaminopimelate: step 1/1. Its function is as follows. Catalyzes the stereoinversion of LL-2,6-diaminopimelate (L,L-DAP) to meso-diaminopimelate (meso-DAP), a precursor of L-lysine and an essential component of the bacterial peptidoglycan. The chain is Diaminopimelate epimerase from Pseudomonas aeruginosa (strain LESB58).